Here is a 274-residue protein sequence, read N- to C-terminus: Formamidopyrimidine-DNA glycosylase (274 aa).

Proline 2 (schiff-base intermediate with DNA) is an active-site residue. The Proton donor role is filled by glutamate 3. The active-site Proton donor; for beta-elimination activity is lysine 58. The DNA site is built by histidine 91, arginine 110, and lysine 152. Residues 237–271 form an FPG-type zinc finger; sequence KVYGRKNLPCLVCENKIETVVIAGRHSAFCPHCQP. Catalysis depends on arginine 261, which acts as the Proton donor; for delta-elimination activity.

It belongs to the FPG family. In terms of assembly, monomer. Requires Zn(2+) as cofactor.

The catalysed reaction is Hydrolysis of DNA containing ring-opened 7-methylguanine residues, releasing 2,6-diamino-4-hydroxy-5-(N-methyl)formamidopyrimidine.. The enzyme catalyses 2'-deoxyribonucleotide-(2'-deoxyribose 5'-phosphate)-2'-deoxyribonucleotide-DNA = a 3'-end 2'-deoxyribonucleotide-(2,3-dehydro-2,3-deoxyribose 5'-phosphate)-DNA + a 5'-end 5'-phospho-2'-deoxyribonucleoside-DNA + H(+). Involved in base excision repair of DNA damaged by oxidation or by mutagenic agents. Acts as a DNA glycosylase that recognizes and removes damaged bases. Has a preference for oxidized purines, such as 7,8-dihydro-8-oxoguanine (8-oxoG). Has AP (apurinic/apyrimidinic) lyase activity and introduces nicks in the DNA strand. Cleaves the DNA backbone by beta-delta elimination to generate a single-strand break at the site of the removed base with both 3'- and 5'-phosphates. This is Formamidopyrimidine-DNA glycosylase from Legionella pneumophila (strain Paris).